Reading from the N-terminus, the 238-residue chain is Xyloglucan-specific endo-beta-1,4-glucanase A (238 aa).

An N-terminal signal peptide occupies residues 1 to 14 (MKLSLLSLATLASA).

This sequence belongs to the glycosyl hydrolase 12 (cellulase H) family.

The protein resides in the secreted. The catalysed reaction is xyloglucan + H2O = xyloglucan oligosaccharides.. Its function is as follows. Catalyzes endohydrolysis of 1,4-beta-D-glucosidic linkages in xyloglucan with retention of the beta-configuration of the glycosyl residues. Specific for xyloglucan and does not hydrolyze other cell wall components. The polypeptide is Xyloglucan-specific endo-beta-1,4-glucanase A (xgeA) (Aspergillus aculeatus).